The sequence spans 488 residues: Ribulose bisphosphate carboxylase large chain 1 (488 aa).

Substrate-binding residues include Asn128 and Thr178. Lys180 functions as the Proton acceptor in the catalytic mechanism. Residue Lys182 coordinates substrate. The Mg(2+) site is built by Lys206, Asp208, and Glu209. Lys206 bears the N6-carboxylysine mark. His298 (proton acceptor) is an active-site residue. Residues Arg299, His331, and Ser383 each contribute to the substrate site.

Belongs to the RuBisCO large chain family. Type I subfamily. In terms of assembly, heterohexadecamer of 8 large chains and 8 small chains. It depends on Mg(2+) as a cofactor.

It carries out the reaction 2 (2R)-3-phosphoglycerate + 2 H(+) = D-ribulose 1,5-bisphosphate + CO2 + H2O. It catalyses the reaction D-ribulose 1,5-bisphosphate + O2 = 2-phosphoglycolate + (2R)-3-phosphoglycerate + 2 H(+). In terms of biological role, ruBisCO catalyzes two reactions: the carboxylation of D-ribulose 1,5-bisphosphate, the primary event in carbon dioxide fixation, as well as the oxidative fragmentation of the pentose substrate. Both reactions occur simultaneously and in competition at the same active site. This chain is Ribulose bisphosphate carboxylase large chain 1, found in Nitrobacter hamburgensis (strain DSM 10229 / NCIMB 13809 / X14).